The sequence spans 561 residues: Guanine nucleotide-binding protein-like 3 (561 aa).

Residues 28–46 (HNRKLKKAAKKQGISRKAK) show a composition bias toward basic residues. Disordered regions lie at residues 28–58 (HNRK…APFK) and 76–110 (KEQN…KKAK). A coiled-coil region spans residues 53 to 98 (NSAPFKEEVLREAEQRKQELETLKEQNKIVKQQEKAAKRKKEKDAA). Residues 76–88 (KEQNKIVKQQEKA) show a composition bias toward basic and acidic residues. Residues 133–319 (CQELNKVIEA…MIDSPGILAA (187 aa)) form the CP-type G domain. GTP is bound by residues 181–184 (NKID), 268–275 (GFPNVGKS), and 312–315 (DSPG). The interval 486-532 (ATTTDAEEEKMDTTTNTDEPEAESHISSTVEPIQEPTEKRKDKPAKE) is disordered. Basic and acidic residues predominate over residues 521-532 (PTEKRKDKPAKE).

The protein belongs to the TRAFAC class YlqF/YawG GTPase family.

The protein localises to the nucleus. The protein resides in the nucleolus. Its function is as follows. May play a role in regulating cellular proliferation. In Danio rerio (Zebrafish), this protein is Guanine nucleotide-binding protein-like 3 (gnl3).